The chain runs to 106 residues: uncharacterized protein (106 aa).

This is an uncharacterized protein from Homo sapiens (Human).